The chain runs to 308 residues: Porphobilinogen deaminase (308 aa).

C241 is subject to S-(dipyrrolylmethanemethyl)cysteine.

It belongs to the HMBS family. Monomer. The cofactor is dipyrromethane.

It catalyses the reaction 4 porphobilinogen + H2O = hydroxymethylbilane + 4 NH4(+). It participates in porphyrin-containing compound metabolism; protoporphyrin-IX biosynthesis; coproporphyrinogen-III from 5-aminolevulinate: step 2/4. Tetrapolymerization of the monopyrrole PBG into the hydroxymethylbilane pre-uroporphyrinogen in several discrete steps. In Staphylococcus aureus (strain MSSA476), this protein is Porphobilinogen deaminase.